A 166-amino-acid chain; its full sequence is NAD(P)H-quinone oxidoreductase subunit I, chloroplastic (166 aa).

2 4Fe-4S ferredoxin-type domains span residues 55 to 84 (GRIHFEFDKCIACEVCVRVCPIDLPVVDWK) and 95 to 124 (LNYSIDFGICIFCGNCVEYCPTNCLSMTEE). 8 residues coordinate [4Fe-4S] cluster: cysteine 64, cysteine 67, cysteine 70, cysteine 74, cysteine 104, cysteine 107, cysteine 110, and cysteine 114.

It belongs to the complex I 23 kDa subunit family. NDH is composed of at least 16 different subunits, 5 of which are encoded in the nucleus. It depends on [4Fe-4S] cluster as a cofactor.

It is found in the plastid. It localises to the chloroplast thylakoid membrane. The enzyme catalyses a plastoquinone + NADH + (n+1) H(+)(in) = a plastoquinol + NAD(+) + n H(+)(out). It carries out the reaction a plastoquinone + NADPH + (n+1) H(+)(in) = a plastoquinol + NADP(+) + n H(+)(out). Functionally, NDH shuttles electrons from NAD(P)H:plastoquinone, via FMN and iron-sulfur (Fe-S) centers, to quinones in the photosynthetic chain and possibly in a chloroplast respiratory chain. The immediate electron acceptor for the enzyme in this species is believed to be plastoquinone. Couples the redox reaction to proton translocation, and thus conserves the redox energy in a proton gradient. In Ambrosia trifida (Giant ragweed), this protein is NAD(P)H-quinone oxidoreductase subunit I, chloroplastic.